A 643-amino-acid chain; its full sequence is Phosphomethylpyrimidine synthase (643 aa).

Substrate contacts are provided by residues asparagine 248, methionine 277, tyrosine 306, histidine 342, 362–364 (SRG), 403–406 (DGLR), and glutamate 442. Histidine 446 is a binding site for Zn(2+). Residue tyrosine 469 participates in substrate binding. Zn(2+) is bound at residue histidine 510. 3 residues coordinate [4Fe-4S] cluster: cysteine 590, cysteine 593, and cysteine 598.

Belongs to the ThiC family. Homodimer. It depends on [4Fe-4S] cluster as a cofactor.

The enzyme catalyses 5-amino-1-(5-phospho-beta-D-ribosyl)imidazole + S-adenosyl-L-methionine = 4-amino-2-methyl-5-(phosphooxymethyl)pyrimidine + CO + 5'-deoxyadenosine + formate + L-methionine + 3 H(+). It functions in the pathway cofactor biosynthesis; thiamine diphosphate biosynthesis. Catalyzes the synthesis of the hydroxymethylpyrimidine phosphate (HMP-P) moiety of thiamine from aminoimidazole ribotide (AIR) in a radical S-adenosyl-L-methionine (SAM)-dependent reaction. The chain is Phosphomethylpyrimidine synthase from Paraburkholderia phymatum (strain DSM 17167 / CIP 108236 / LMG 21445 / STM815) (Burkholderia phymatum).